We begin with the raw amino-acid sequence, 384 residues long: Glucans biosynthesis protein C (384 aa).

10 helical membrane passes run 17–37 (AWLM…THSW), 54–74 (FIHA…SYML), 91–111 (VGIP…ILLQ), 140–160 (LWFL…FTWF), 173–193 (AISL…YAAI), 212–232 (FIVM…LAFI), 240–260 (FTTP…AYLL), 274–294 (TESV…FSLG), 311–331 (ASLF…AYIT), and 338–358 (LIGF…LYEI).

It belongs to the acyltransferase 3 family. OpgC subfamily.

It is found in the cell membrane. The protein operates within glycan metabolism; osmoregulated periplasmic glucan (OPG) biosynthesis. Its function is as follows. Necessary for the succinyl substitution of periplasmic glucans. Could catalyze the transfer of succinyl residues from the cytoplasmic side of the membrane to the nascent glucan backbones on the periplasmic side of the membrane. The sequence is that of Glucans biosynthesis protein C from Salmonella heidelberg (strain SL476).